We begin with the raw amino-acid sequence, 480 residues long: MSKGEIVQVIGPVVDVEFPLDKDLPDINNALRVTNNNGDTLVLEVTLELGDGVLRTISMESTDGLRRGMEVEDTGAPISVPVGKDTLGRVFNVLGDPIDGGPALGKDVKREGIHKEAPKYDELSTSEEILETGIKVIDLLEPYVRGGKVGLFGGAGVGKTTIIQELIHNIAQEHGGISVFTGVGERTREGNDLYFEMKASGVLSKTAMVFGQMNEPPGARMRVALTGLTIAEYFRDVEGLDVLLFIDNIFRFTQAGSEVSALLGRMPSAVGYQPTLATEMGQLQERITSTKKGSITSIQAVYVPADDYTDPAPATTFAHLDATTNLERRLVEQGIYPAVDPLESTSSALDPEIVGEEHYEVAVKVQHILQRYQELQDIISVLGMDELSDDEKLIVERARKIQFFLSQNFFVAEQFTGIPGSYVPIKETIKGFKMIIDGKLDDLPEDAFRNVGPIEDVIKQAEKMGVTPKNPEAKAILEAK.

153-160 (GGAGVGKT) contacts ATP.

The protein belongs to the ATPase alpha/beta chains family. As to quaternary structure, F-type ATPases have 2 components, CF(1) - the catalytic core - and CF(0) - the membrane proton channel. CF(1) has five subunits: alpha(3), beta(3), gamma(1), delta(1), epsilon(1). CF(0) has three main subunits: a(1), b(2) and c(9-12). The alpha and beta chains form an alternating ring which encloses part of the gamma chain. CF(1) is attached to CF(0) by a central stalk formed by the gamma and epsilon chains, while a peripheral stalk is formed by the delta and b chains.

It localises to the cell membrane. The catalysed reaction is ATP + H2O + 4 H(+)(in) = ADP + phosphate + 5 H(+)(out). Functionally, produces ATP from ADP in the presence of a proton gradient across the membrane. The catalytic sites are hosted primarily by the beta subunits. The polypeptide is ATP synthase subunit beta (Lactobacillus johnsonii (strain CNCM I-12250 / La1 / NCC 533)).